The primary structure comprises 392 residues: O-phospho-L-seryl-tRNA:Cys-tRNA synthase (392 aa).

Residues 85 to 86, Asn-190, and 213 to 215 each bind pyridoxal 5'-phosphate; these read AR and SGH. Residue Lys-216 is modified to N6-(pyridoxal phosphate)lysine.

The protein belongs to the SepCysS family. Homodimer. Interacts with SepRS. Pyridoxal 5'-phosphate is required as a cofactor.

The catalysed reaction is O-phospho-L-seryl-tRNA(Cys) + hydrogen sulfide + H(+) = L-cysteinyl-tRNA(Cys) + phosphate. Functionally, converts O-phospho-L-seryl-tRNA(Cys) (Sep-tRNA(Cys)) to L-cysteinyl-tRNA(Cys) (Cys-tRNA(Cys)). This chain is O-phospho-L-seryl-tRNA:Cys-tRNA synthase, found in Methanoculleus marisnigri (strain ATCC 35101 / DSM 1498 / JR1).